The primary structure comprises 521 residues: Maturase K (521 aa).

Belongs to the intron maturase 2 family. MatK subfamily.

It is found in the plastid. The protein resides in the chloroplast. Its function is as follows. Usually encoded in the trnK tRNA gene intron. Probably assists in splicing its own and other chloroplast group II introns. This is Maturase K from Kniphofia uvaria (Red-hot poker).